The chain runs to 842 residues: Molybdenum cofactor sulfurase (842 aa).

Position 236 is an N6-(pyridoxal phosphate)lysine (lysine 236). Cysteine 402 is a catalytic residue. Residues 637 to 680 are disordered; it reads PGSQHGDAQRSSKARLQKHQITTDQESDVQEVHPGSGTTTDSTW. Positions 663-831 constitute an MOSC domain; the sequence is SDVQEVHPGS…AARGDVAYPT (169 aa).

It belongs to the class-V pyridoxal-phosphate-dependent aminotransferase family. MOCOS subfamily. It depends on pyridoxal 5'-phosphate as a cofactor.

The enzyme catalyses Mo-molybdopterin + L-cysteine + AH2 = thio-Mo-molybdopterin + L-alanine + A + H2O. The protein operates within cofactor biosynthesis; molybdopterin biosynthesis. Functionally, sulfurates the molybdenum cofactor. Sulfation of molybdenum is essential for xanthine dehydrogenase (XDH) and aldehyde oxidase (ADO) enzymes in which molybdenum cofactor is liganded by 1 oxygen and 1 sulfur atom in active form. In Pyricularia oryzae (strain 70-15 / ATCC MYA-4617 / FGSC 8958) (Rice blast fungus), this protein is Molybdenum cofactor sulfurase.